The chain runs to 178 residues: Protein RICE FLOWERING LOCUS T 1 (178 aa).

Belongs to the phosphatidylethanolamine-binding protein family. In terms of assembly, interacts with FTIP1. In terms of tissue distribution, expressed in leaf vascular tissues. Specifically expressed in the phloem including companion cells.

Its subcellular location is the cytoplasm. The protein resides in the nucleus. The protein localises to the endoplasmic reticulum. In terms of biological role, probable mobile flower-promoting signal (florigen) that moves from the leaf to the shoot apical meristem (SAM) and induces flowering. Promotes the transition from vegetative growth to flowering under long day (LD) conditions. Acts upstream of MADS14 and MADS15. May also participate in the promotion of flowering under short day (SD) conditions. The protein is Protein RICE FLOWERING LOCUS T 1 of Oryza sativa subsp. japonica (Rice).